A 327-amino-acid chain; its full sequence is Phenylalanine--tRNA ligase alpha subunit (327 aa).

Glu-252 provides a ligand contact to Mg(2+).

This sequence belongs to the class-II aminoacyl-tRNA synthetase family. Phe-tRNA synthetase alpha subunit type 1 subfamily. Tetramer of two alpha and two beta subunits. Mg(2+) serves as cofactor.

The protein resides in the cytoplasm. It catalyses the reaction tRNA(Phe) + L-phenylalanine + ATP = L-phenylalanyl-tRNA(Phe) + AMP + diphosphate + H(+). This is Phenylalanine--tRNA ligase alpha subunit from Klebsiella pneumoniae subsp. pneumoniae (strain ATCC 700721 / MGH 78578).